We begin with the raw amino-acid sequence, 210 residues long: Casparian strip membrane protein 1 (210 aa).

Residues 1-25 (MEKSEATTIDVAETSRESKGKAPLL) are disordered. The Cytoplasmic portion of the chain corresponds to 1–48 (MEKSEATTIDVAETSRESKGKAPLLRDPPAWVPAAVERQRAAPAYKRG). A helical transmembrane segment spans residues 49–69 (VAIFDLILRISAATAALAATI). At 70-98 (TMGTTEQTLPFFTQFFQFQASYDDLPTFT) the chain is on the extracellular side. The helical transmembrane segment at 99–119 (FFVIAMSIVTGYLVLSVPFSI) threads the bilayer. The Cytoplasmic portion of the chain corresponds to 120–138 (VCIARPVAAAPRLLLILCD). The chain crosses the membrane as a helical span at residues 139 to 159 (TLAVTLNTSAAGASAAIVYLA). The Extracellular portion of the chain corresponds to 160–183 (HNGNSDANWLAICQQFNDFCQRTS). A helical membrane pass occupies residues 184–204 (GAVVASFVAVVLLIFLVVLSA). Over 205–210 (SALKKH) the chain is Cytoplasmic.

Belongs to the Casparian strip membrane proteins (CASP) family. In terms of assembly, homodimer and heterodimers.

It localises to the cell membrane. In terms of biological role, regulates membrane-cell wall junctions and localized cell wall deposition. Required for establishment of the Casparian strip membrane domain (CSD) and the subsequent formation of Casparian strips, a cell wall modification of the root endodermis that determines an apoplastic barrier between the intraorganismal apoplasm and the extraorganismal apoplasm and prevents lateral diffusion. The protein is Casparian strip membrane protein 1 of Erythranthe guttata (Yellow monkey flower).